The following is a 103-amino-acid chain: Spherulin-3A (103 aa).

An N-terminal arm region spans residues 1–13; sequence MSVCKGVSGNPAK. 2 consecutive Beta/gamma crystallin 'Greek key' domains span residues 14-55 and 57-99; these read GEVF…KVGP and TKAF…IVAT.

This sequence belongs to the beta/gamma-crystallin family.

It localises to the cytoplasm. Functionally, structural protein. This is Spherulin-3A from Physarum polycephalum (Slime mold).